A 628-amino-acid chain; its full sequence is Putative lipase ATG15 (628 aa).

Topologically, residues 1–32 are cytoplasmic; that stretch reads MLAAEKRRLLHKTRPVSASEKPGSIYPQRALY. Residues 33-53 form a helical; Signal-anchor for type II membrane protein membrane-spanning segment; it reads LLVCFSIATISLGYLHFIGAI. At 54-628 the chain is on the lumenal side; the sequence is DIGRFGISSV…GYDGDVDDDQ (575 aa). Asparagine 261, asparagine 299, and asparagine 383 each carry an N-linked (GlcNAc...) asparagine glycan. Serine 401 acts as the Charge relay system in catalysis. Asparagine 518 carries N-linked (GlcNAc...) asparagine glycosylation. Residues 540–605 are disordered; the sequence is HDDDVPDEPE…ISEPSESPKK (66 aa). Residues 562–586 show a composition bias toward low complexity; sequence PSSSTSDGKNNRISSTATTTISPTS. The segment covering 591–600 has biased composition (polar residues); the sequence is PTSSDISEPS.

This sequence belongs to the AB hydrolase superfamily. Lipase family. In terms of assembly, binds to both phosphatidylinositol (PI) and phosphatidylinositol 3,5-bisphosphate (PIP2).

Its subcellular location is the endosome. It localises to the multivesicular body membrane. The protein localises to the prevacuolar compartment membrane. The catalysed reaction is a triacylglycerol + H2O = a diacylglycerol + a fatty acid + H(+). Functionally, lipase which is essential for lysis of subvacuolar cytoplasm to vacuole targeted bodies and intravacuolar autophagic bodies. Involved in the lysis of intravacuolar multivesicular body (MVB) vesicles. The intravacuolar membrane disintegration by ATG15 is critical to life span extension. The polypeptide is Putative lipase ATG15 (ATG15) (Scheffersomyces stipitis (strain ATCC 58785 / CBS 6054 / NBRC 10063 / NRRL Y-11545) (Yeast)).